The following is a 284-amino-acid chain: TnP I resolvase (284 aa).

The region spanning 1–84 (MDVAKQFSSY…SLAKFNEFLI (84 aa)) is the Core-binding (CB) domain. The Tyr recombinase domain maps to 107–282 (ASPTQIVELD…NQLQLKNKME (176 aa)). Active-site residues include arginine 145, lysine 170, histidine 234, arginine 237, and histidine 260. Tyrosine 269 acts as the O-(3'-phospho-DNA)-tyrosine intermediate in catalysis.

This sequence belongs to the 'phage' integrase family.

Functionally, resolvase catalyzes the resolution (a site-specific recombination) of the cointegrated replicon to yield the final transposition products. The chain is TnP I resolvase (tnpI) from Bacillus thuringiensis.